Consider the following 84-residue polypeptide: Exodeoxyribonuclease 7 small subunit (84 aa).

The protein belongs to the XseB family. As to quaternary structure, heterooligomer composed of large and small subunits.

It is found in the cytoplasm. It catalyses the reaction Exonucleolytic cleavage in either 5'- to 3'- or 3'- to 5'-direction to yield nucleoside 5'-phosphates.. Its function is as follows. Bidirectionally degrades single-stranded DNA into large acid-insoluble oligonucleotides, which are then degraded further into small acid-soluble oligonucleotides. The sequence is that of Exodeoxyribonuclease 7 small subunit from Bartonella quintana (strain Toulouse) (Rochalimaea quintana).